Reading from the N-terminus, the 237-residue chain is Phosphoribosylaminoimidazole-succinocarboxamide synthase (237 aa).

This sequence belongs to the SAICAR synthetase family.

The catalysed reaction is 5-amino-1-(5-phospho-D-ribosyl)imidazole-4-carboxylate + L-aspartate + ATP = (2S)-2-[5-amino-1-(5-phospho-beta-D-ribosyl)imidazole-4-carboxamido]succinate + ADP + phosphate + 2 H(+). Its pathway is purine metabolism; IMP biosynthesis via de novo pathway; 5-amino-1-(5-phospho-D-ribosyl)imidazole-4-carboxamide from 5-amino-1-(5-phospho-D-ribosyl)imidazole-4-carboxylate: step 1/2. This Marinobacter nauticus (strain ATCC 700491 / DSM 11845 / VT8) (Marinobacter aquaeolei) protein is Phosphoribosylaminoimidazole-succinocarboxamide synthase.